The primary structure comprises 278 residues: Elongation factor Ts (278 aa).

The tract at residues 80-83 (TDFV) is involved in Mg(2+) ion dislocation from EF-Tu.

Belongs to the EF-Ts family.

The protein localises to the cytoplasm. Associates with the EF-Tu.GDP complex and induces the exchange of GDP to GTP. It remains bound to the aminoacyl-tRNA.EF-Tu.GTP complex up to the GTP hydrolysis stage on the ribosome. The polypeptide is Elongation factor Ts (Renibacterium salmoninarum (strain ATCC 33209 / DSM 20767 / JCM 11484 / NBRC 15589 / NCIMB 2235)).